A 173-amino-acid polypeptide reads, in one-letter code: Terpene cyclase subB (173 aa).

4 helical membrane-spanning segments follow: residues 11–31, 51–71, 112–132, and 141–161; these read PGYLEVAWIADTCKLLMGLGW, ALMPLCCNFAWELTYAVIYPF, LPFIFIICIAAWTTAHLALAL, and AFSAYGCQLLLSVGALCQLLS.

The protein belongs to the paxB family.

Its subcellular location is the membrane. It functions in the pathway secondary metabolite biosynthesis; terpenoid biosynthesis. Functionally, terpene cyclase; part of the gene cluster that mediates the biosynthesis of the immunosuppressants subglutinols, meroterpenoids consisting of an alpha-pyrone (4-hydroxy-5,6-dimethyl-2-pyrone) moiety attached to a decalin core fused to a five-membered cyclic ether carrying a prenylside chain. The first step of the pathway is the synthesis of the alpha-pyrone moiety by the polyketide synthase subA via condensation of one acetyl-CoA starter unit with 3 malonyl-CoA units and 2 methylations. The alpha-pyrone is then combined with geranylgeranyl pyrophosphate (GGPP) formed by the GGPP synthase subD through the action of the prenyltransferase subC to yield a linear alpha-pyrone diterpenoid. Subsequent steps in the subglutinol biosynthetic pathway involve the decalin core formation, which is thought to be initiated by the epoxidation of the C10-C11 olefin by the FAD-dependent oxidoreductase subE. The following cyclization cascade would be catalyzed by the terpene cyclase subB. Lastly, the FAD-dependent dehydrogenase subF probably catalyzes the five-membered cyclic ether formation to complete the formation of subglutinol A. Subsequent redox reactions appear to give rise to subglutinol C and D, however, it remains unclear which enzymes are responsible for these transformations. SubD may have secondary function in the conversion of the identified subglutinols to subglutinol analog 45, which seems to be the major product of the cluster. The sequence is that of Terpene cyclase subB from Metarhizium robertsii (strain ARSEF 23 / ATCC MYA-3075) (Metarhizium anisopliae (strain ARSEF 23)).